The sequence spans 149 residues: MDKMNPAHLLVLAAVCVSLLGASSIPPQALNLNQFRLMIKCTNDRVWADFVDYGCYCVARDSNTPVDDLDRCCQAQKQCYDEAVKVHGCKPLVMFYSFECRYLASDLDCSGNNTKCRNFVCNCDRTATLCILTATYNRNNHKIDPSRCQ.

The signal sequence occupies residues 1-30 (MDKMNPAHLLVLAAVCVSLLGASSIPPQAL). Cystine bridges form between C41/C100, C55/C148, C57/C73, C72/C130, C79/C123, C89/C116, and C109/C121.

Belongs to the phospholipase A2 family. Group I subfamily. K49 sub-subfamily. In terms of assembly, heterodimer of an alpha (Kunitz-type) and a beta (phospholipase A2 homolog) chains; non-covalently-linked. In terms of tissue distribution, expressed by the venom gland.

It is found in the secreted. In terms of biological role, heterodimer: MitTx, a heteromeric complex between Kunitz- and phospholipase-A2-like proteins, potently, persistently and selectively activates rat and chicken acid-sensing ion channel ASIC1. Both alternatively spliced rat isoforms ASIC1a and ASIC1b are activated, with a higher potency for ASIC1a (EC(50)=9.4 nM) vs ASIC1b (EC(50)=23 nM). The rat ASIC3 subtype is also sensitive to the heterodimer, but with a lower potency (EC(50)=830 nM). On rat ASIC2a, the toxin shows a very weak activation, but produces a remarkable potentiation (&gt;100-fold) of protons when the extracellular pH drops below neutrality. Moderate and weak activations are also observed on the heterotrimers Asic1a-Asic2a and Asic1a-Asic3 (expressed in CHO cells), respectively. The binding sites of the beta subunit of MitTx and the spider psalmotoxin-1 toxin overlap, explaining why these toxins are mutually exclusive. In vivo, the heterodimer elicits robust pain-related behavior in mice by activation of ASIC1 channels on capsaicin-sensitive nerve fibers. Functionally, monomer: does not have phospholipase A2 activity but may maintain some lipid-binding character from its PLA2 lineage, which could aid in effecting neuronal depolarization. The chain is Basic phospholipase A2 homolog MitTx-beta from Micrurus tener tener (Texas coral snake).